A 315-amino-acid chain; its full sequence is MADIPDNAPQHCPGTDSTEAGKSSACQGCPNQSICASGAAAGPDPAIEEIKEKMSLVKHKILVLSGKGGVGKSTFSAHLAHGLAQDEGKEVALLDVDICGPSIPKMMGLEGEQVHQSGSGWSPVYVEDNLAVMSVGFLLSSPDDAVIWRGPKKNGMIKQFLRDVDWGDVDYLIVDTPPGTSDEHLSVVQYLSAAGIDGAVIITTPQEVSLQDVRKEINFCRKVKLPIIGVVENMSGFICPKCKNESQIFPPTTGGAEKMCTDLSVSLLGKVPLDPNIGKSCDTGKSFFTEIPDSPATLSYRKIIQRIQDYCEKKK.

Residues 1 to 23 are disordered; sequence MADIPDNAPQHCPGTDSTEAGKS. [4Fe-4S] cluster contacts are provided by Cys-12, Cys-26, Cys-29, and Cys-35. 66-73 serves as a coordination point for ATP; it reads GKGGVGKS. Cys-239 and Cys-242 together coordinate [4Fe-4S] cluster.

This sequence belongs to the Mrp/NBP35 ATP-binding proteins family. NUBP1/NBP35 subfamily. Heterotetramer of 2 nubp1 and 2 nubp2 chains. It depends on [4Fe-4S] cluster as a cofactor.

It localises to the cytoplasm. Functionally, component of the cytosolic iron-sulfur (Fe/S) protein assembly (CIA) machinery. Required for maturation of extramitochondrial Fe-S proteins. The nubp1-nubp2 heterotetramer forms a Fe-S scaffold complex, mediating the de novo assembly of an Fe-S cluster and its transfer to target apoproteins. This Xenopus laevis (African clawed frog) protein is Cytosolic Fe-S cluster assembly factor nubp1-A (nubp1-A).